Reading from the N-terminus, the 210-residue chain is Large ribosomal subunit protein bL25 (210 aa).

Residues 1–23 are disordered; it reads MSDIGTLSAKGRDRAGKGAARAT.

This sequence belongs to the bacterial ribosomal protein bL25 family. CTC subfamily. Part of the 50S ribosomal subunit; part of the 5S rRNA/L5/L18/L25 subcomplex. Contacts the 5S rRNA. Binds to the 5S rRNA independently of L5 and L18.

In terms of biological role, this is one of the proteins that binds to the 5S RNA in the ribosome where it forms part of the central protuberance. This is Large ribosomal subunit protein bL25 from Rhodospirillum rubrum (strain ATCC 11170 / ATH 1.1.1 / DSM 467 / LMG 4362 / NCIMB 8255 / S1).